Consider the following 293-residue polypeptide: Exosome complex component RRP4 (293 aa).

Residues 1 to 20 (MALEMRLPKARKPLSESLGR) are disordered. An S1 motif domain is found at 79-159 (EVGDIVVGRI…SDGAVSLHTR (81 aa)). A Phosphoserine modification is found at Ser124.

It belongs to the RRP4 family. In terms of assembly, component of the RNA exosome core complex (Exo-9), composed of EXOSC1, EXOSC2, EXOSC3, EXOSC4, EXOSC5, EXOSC6, EXOSC7, EXOSC8 and EXOSC9; within the complex interacts with EXOSC4 and EXOSC7. The catalytically inactive RNA exosome core complex (Exo-9) associates with the catalytic subunit EXOSC10/RRP6. Exo-9 may associate with DIS3 to form the nucleolar exosome complex, or DIS3L to form the cytoplasmic exosome complex. Exo-9 is formed by a hexameric base ring consisting of the heterodimers EXOSC4-EXOSC9, EXOSC5-EXOSC8 and EXOSC6-EXOSC7, and a cap ring consisting of EXOSC1, EXOSC2 and EXOSC3. The RNA exosome complex associates with cofactors C1D/RRP47, MPHOSPH6/MPP6 and MTREX/MTR4. Interacts with GTPBP1. Interacts with ZFP36L1 (via N-terminus).

Its subcellular location is the cytoplasm. The protein resides in the nucleus. It localises to the nucleolus. Non-catalytic component of the RNA exosome complex which has 3'-&gt;5' exoribonuclease activity and participates in a multitude of cellular RNA processing and degradation events. In the nucleus, the RNA exosome complex is involved in proper maturation of stable RNA species such as rRNA, snRNA and snoRNA, in the elimination of RNA processing by-products and non-coding 'pervasive' transcripts, such as antisense RNA species and promoter-upstream transcripts (PROMPTs), and of mRNAs with processing defects, thereby limiting or excluding their export to the cytoplasm. The RNA exosome may be involved in Ig class switch recombination (CSR) and/or Ig variable region somatic hypermutation (SHM) by targeting AICDA deamination activity to transcribed dsDNA substrates. In the cytoplasm, the RNA exosome complex is involved in general mRNA turnover and specifically degrades inherently unstable mRNAs containing AU-rich elements (AREs) within their 3' untranslated regions, and in RNA surveillance pathways, preventing translation of aberrant mRNAs. It seems to be involved in degradation of histone mRNA. The catalytic inactive RNA exosome core complex of 9 subunits (Exo-9) is proposed to play a pivotal role in the binding and presentation of RNA for ribonucleolysis, and to serve as a scaffold for the association with catalytic subunits and accessory proteins or complexes. EXOSC2 as peripheral part of the Exo-9 complex stabilizes the hexameric ring of RNase PH-domain subunits through contacts with EXOSC4 and EXOSC7. This Mus musculus (Mouse) protein is Exosome complex component RRP4 (Exosc2).